Consider the following 359-residue polypeptide: 4'-phosphopantetheinyl transferase A (359 aa).

The protein belongs to the P-Pant transferase superfamily.

The catalysed reaction is apo-[ACP] + CoA = holo-[ACP] + adenosine 3',5'-bisphosphate + H(+). Its activity is regulated as follows. Activity is inhibited bythe antifunfal copmpounds PD 404,182, 6-nitroso-1,2-benzopyrone, and calmidazolium chloride with IC(50) values of 3.9 uM, 35.2 uM, and 19.2 uM, respectively. Functionally, acyl-carrier-protein synthase that transfers the 4'-phosphopantetheine moiety from coenzyme A to a Ser of an acyl-carrier-protein. The 4'-phosphopantetheine (4'-PPT) portion of CoA provides the essential prosthetic group for a number of carrier proteins and multi-domain enzymes, priming them for the acceptance of acyl building blocks in fatty acid synthesis and many aspects of secondary metabolism mediated by polyketide synthases (PKSs) and non-ribosomal peptide synthetases (NRPSs). PptA is able to transfer the cofactor to a broad range of enzymes with acyl- or peptidyl-carrier protein domains and activates target enzymes involved in the synthesis of lysine, but also secondary metabolites including gliotoxin, fumigaclavine C, fumiquinazole A, fumiquinazoline C, pyripyroprene A, fumagillin, the siderophores triacetylfusarinine C (TAFC) and ferricrocin (FC), and dihydroxy naphthalene (DHN)-melanin. Plays an essential role in virulence. This chain is 4'-phosphopantetheinyl transferase A, found in Aspergillus fumigatus (strain ATCC MYA-4609 / CBS 101355 / FGSC A1100 / Af293) (Neosartorya fumigata).